The primary structure comprises 35 residues: MQVNNLGFIASILFVLVPTVFLLILFIQTGKQSES.

At M1 the chain carries N-formylmethionine. The chain crosses the membrane as a helical span at residues 7–28 (GFIASILFVLVPTVFLLILFIQ).

Belongs to the PsbM family. As to quaternary structure, PSII is composed of 1 copy each of membrane proteins PsbA, PsbB, PsbC, PsbD, PsbE, PsbF, PsbH, PsbI, PsbJ, PsbK, PsbL, PsbM, PsbT, PsbX, PsbY, PsbZ, Psb30/Ycf12, peripheral proteins PsbO, CyanoQ (PsbQ), PsbU, PsbV and a large number of cofactors. It forms dimeric complexes.

The protein localises to the cellular thylakoid membrane. Functionally, one of the components of the core complex of photosystem II (PSII). PSII is a light-driven water:plastoquinone oxidoreductase that uses light energy to abstract electrons from H(2)O, generating O(2) and a proton gradient subsequently used for ATP formation. It consists of a core antenna complex that captures photons, and an electron transfer chain that converts photonic excitation into a charge separation. This subunit is found at the monomer-monomer interface. Involved in assembly of monomeric PSII from the CP43-less intermediate. The protein is Photosystem II reaction center protein M of Synechocystis sp. (strain ATCC 27184 / PCC 6803 / Kazusa).